A 539-amino-acid chain; its full sequence is 2-isopropylmalate synthase (539 aa).

Positions 8 to 269 (VLIFDTTLRD…YFNPFFGRPP (262 aa)) constitute a Pyruvate carboxyltransferase domain. Residues D17, H208, H210, and N244 each contribute to the Mn(2+) site. The tract at residues 408 to 539 (QLKLVQVSCG…DLAKVEKKGI (132 aa)) is regulatory domain.

This sequence belongs to the alpha-IPM synthase/homocitrate synthase family. LeuA type 1 subfamily. Homodimer. Mn(2+) is required as a cofactor.

Its subcellular location is the cytoplasm. It catalyses the reaction 3-methyl-2-oxobutanoate + acetyl-CoA + H2O = (2S)-2-isopropylmalate + CoA + H(+). The protein operates within amino-acid biosynthesis; L-leucine biosynthesis; L-leucine from 3-methyl-2-oxobutanoate: step 1/4. Catalyzes the condensation of the acetyl group of acetyl-CoA with 3-methyl-2-oxobutanoate (2-ketoisovalerate) to form 3-carboxy-3-hydroxy-4-methylpentanoate (2-isopropylmalate). This chain is 2-isopropylmalate synthase, found in Prochlorococcus marinus (strain NATL2A).